Reading from the N-terminus, the 206-residue chain is Ras-related protein Rab-18 (206 aa).

Methionine 1 carries the post-translational modification N-acetylmethionine. GTP is bound by residues serine 17, glycine 20, lysine 21, serine 22, serine 23, aspartate 34, proline 35, threonine 40, glycine 66, lysine 123, and aspartate 125. Serine 22 is a Mg(2+) binding site. 2 short sequence motifs (switch) span residues 31–45 and 63–80; these read DTFD…GVDF and DTAG…YYRG. A Mg(2+)-binding site is contributed by threonine 40. At serine 144 the chain carries Phosphoserine. Alanine 152 is a GTP binding site. A lipid anchor (S-palmitoyl cysteine) is attached at cysteine 199. Position 203 is a cysteine methyl ester (cysteine 203). Cysteine 203 is lipidated: S-geranylgeranyl cysteine. Residues 204–206 constitute a propeptide, removed in mature form; the sequence is SVL.

Belongs to the small GTPase superfamily. Rab family. In terms of assembly, interacts (in GTP-bound form) with ZFYVE1. Interacts with ZW10 and this interaction is enhanced in the presence of ZFYVE1. Interacts with BSCL2. It depends on Mg(2+) as a cofactor. Expression is high in the brain, moderate in the pituitary, and low in the liver. Detected in all tissues. Highly enriched on apical endocytic structures in polarized epithelial cells of kidney proximal tubules. Detected on both the apical and basolateral domains in epithelial cells of the intestine.

The protein resides in the endoplasmic reticulum membrane. The protein localises to the golgi apparatus. It localises to the cis-Golgi network membrane. It is found in the lipid droplet. Its subcellular location is the apical cell membrane. The catalysed reaction is GTP + H2O = GDP + phosphate + H(+). Regulated by guanine nucleotide exchange factor (GEF) RAB3GAP1-RAB3GAP2 complex at the cis-Golgi membrane which promotes the exchange of bound GDP for free GTP. Regulated by GTPase activating protein (GAP) TBC1D20 at the ER membrane which increases the GTP hydrolysis activity. Inhibited by GDP dissociation inhibitors (GDIs) which prevent Rab-GDP dissociation. Its function is as follows. The small GTPases Rab are key regulators of intracellular membrane trafficking, from the formation of transport vesicles to their fusion with membranes. Rabs cycle between an inactive GDP-bound form and an active GTP-bound form that is able to recruit to membranes different sets of downstream effectors directly responsible for vesicle formation, movement, tethering and fusion. RAB18 is required for the localization of ZFYVE1 to lipid droplets and for its function in mediating the formation of endoplasmic reticulum-lipid droplets (ER-LD) contacts. Also required for maintaining endoplasmic reticulum structure. Plays a role in apical endocytosis/recycling. Plays a key role in eye and brain development and neurodegeneration. In Mus musculus (Mouse), this protein is Ras-related protein Rab-18.